A 796-amino-acid polypeptide reads, in one-letter code: Choline transporter-like 2 (796 aa).

N-linked (GlcNAc...) asparagine glycosylation occurs at asparagine 20. The helical transmembrane segment at 35–55 (PCLLLFVLFLGGWAFIAQYAI) threads the bilayer. Residues asparagine 209 and asparagine 284 are each glycosylated (N-linked (GlcNAc...) asparagine). A run of 4 helical transmembrane segments spans residues 304 to 324 (WSIV…YIAL), 332 to 352 (ILWF…YFSV), 386 to 406 (LYLS…VIVL), and 431 to 451 (VFFP…AIGV). N-linked (GlcNAc...) asparagine glycosylation is found at asparagine 488 and asparagine 520. The next 5 helical transmembrane spans lie at 542 to 562 (VFGF…VLAS), 585 to 605 (FFQT…ILAI), 626 to 648 (AVTR…FLKF), 691 to 711 (FLFF…TYYF), and 724 to 744 (IAVP…VFFG).

It belongs to the CTL (choline transporter-like) family.

The protein localises to the membrane. This chain is Choline transporter-like 2, found in Drosophila melanogaster (Fruit fly).